A 181-amino-acid polypeptide reads, in one-letter code: ATP synthase subunit delta (181 aa).

Belongs to the ATPase delta chain family. As to quaternary structure, F-type ATPases have 2 components, F(1) - the catalytic core - and F(0) - the membrane proton channel. F(1) has five subunits: alpha(3), beta(3), gamma(1), delta(1), epsilon(1). F(0) has three main subunits: a(1), b(2) and c(10-14). The alpha and beta chains form an alternating ring which encloses part of the gamma chain. F(1) is attached to F(0) by a central stalk formed by the gamma and epsilon chains, while a peripheral stalk is formed by the delta and b chains.

The protein resides in the cell inner membrane. F(1)F(0) ATP synthase produces ATP from ADP in the presence of a proton or sodium gradient. F-type ATPases consist of two structural domains, F(1) containing the extramembraneous catalytic core and F(0) containing the membrane proton channel, linked together by a central stalk and a peripheral stalk. During catalysis, ATP synthesis in the catalytic domain of F(1) is coupled via a rotary mechanism of the central stalk subunits to proton translocation. Functionally, this protein is part of the stalk that links CF(0) to CF(1). It either transmits conformational changes from CF(0) to CF(1) or is implicated in proton conduction. The protein is ATP synthase subunit delta of Fervidobacterium nodosum (strain ATCC 35602 / DSM 5306 / Rt17-B1).